We begin with the raw amino-acid sequence, 296 residues long: Nitrogenase iron protein 1 (296 aa).

Gly11 to Ser18 contacts ATP. Residue Cys99 coordinates [4Fe-4S] cluster. Arg102 carries the ADP-ribosylarginine; by dinitrogenase reductase ADP-ribosyltransferase modification. A [4Fe-4S] cluster-binding site is contributed by Cys133.

It belongs to the NifH/BchL/ChlL family. Homodimer. Requires [4Fe-4S] cluster as cofactor. In terms of processing, the reversible ADP-ribosylation of Arg-102 inactivates the nitrogenase reductase and regulates nitrogenase activity.

The enzyme catalyses N2 + 8 reduced [2Fe-2S]-[ferredoxin] + 16 ATP + 16 H2O = H2 + 8 oxidized [2Fe-2S]-[ferredoxin] + 2 NH4(+) + 16 ADP + 16 phosphate + 6 H(+). Functionally, the key enzymatic reactions in nitrogen fixation are catalyzed by the nitrogenase complex, which has 2 components: the iron protein and the molybdenum-iron protein. The protein is Nitrogenase iron protein 1 (nifH1) of Azorhizobium caulinodans (strain ATCC 43989 / DSM 5975 / JCM 20966 / LMG 6465 / NBRC 14845 / NCIMB 13405 / ORS 571).